Here is a 122-residue protein sequence, read N- to C-terminus: Small ribosomal subunit protein uS13 (122 aa).

The tract at residues Leu-94–Lys-122 is disordered. A compositionally biased stretch (basic residues) spans Gln-101–Lys-122.

It belongs to the universal ribosomal protein uS13 family. Part of the 30S ribosomal subunit. Forms a loose heterodimer with protein S19. Forms two bridges to the 50S subunit in the 70S ribosome.

Functionally, located at the top of the head of the 30S subunit, it contacts several helices of the 16S rRNA. In the 70S ribosome it contacts the 23S rRNA (bridge B1a) and protein L5 of the 50S subunit (bridge B1b), connecting the 2 subunits; these bridges are implicated in subunit movement. Contacts the tRNAs in the A and P-sites. The chain is Small ribosomal subunit protein uS13 from Chlamydia muridarum (strain MoPn / Nigg).